Here is a 179-residue protein sequence, read N- to C-terminus: Large ribosomal subunit protein uL5 (179 aa).

The protein belongs to the universal ribosomal protein uL5 family. In terms of assembly, part of the 50S ribosomal subunit; part of the 5S rRNA/L5/L18/L25 subcomplex. Contacts the 5S rRNA and the P site tRNA. Forms a bridge to the 30S subunit in the 70S ribosome.

This is one of the proteins that bind and probably mediate the attachment of the 5S RNA into the large ribosomal subunit, where it forms part of the central protuberance. In the 70S ribosome it contacts protein S13 of the 30S subunit (bridge B1b), connecting the 2 subunits; this bridge is implicated in subunit movement. Contacts the P site tRNA; the 5S rRNA and some of its associated proteins might help stabilize positioning of ribosome-bound tRNAs. This is Large ribosomal subunit protein uL5 from Mannheimia succiniciproducens (strain KCTC 0769BP / MBEL55E).